Here is a 333-residue protein sequence, read N- to C-terminus: Phosphate acyltransferase (333 aa).

This sequence belongs to the PlsX family. Homodimer. Probably interacts with PlsY.

It localises to the cytoplasm. The catalysed reaction is a fatty acyl-[ACP] + phosphate = an acyl phosphate + holo-[ACP]. Its pathway is lipid metabolism; phospholipid metabolism. Its function is as follows. Catalyzes the reversible formation of acyl-phosphate (acyl-PO(4)) from acyl-[acyl-carrier-protein] (acyl-ACP). This enzyme utilizes acyl-ACP as fatty acyl donor, but not acyl-CoA. This is Phosphate acyltransferase from Desulforamulus reducens (strain ATCC BAA-1160 / DSM 100696 / MI-1) (Desulfotomaculum reducens).